We begin with the raw amino-acid sequence, 163 residues long: Nucleotide-binding protein LBJ_2391 (163 aa).

This sequence belongs to the YajQ family.

Functionally, nucleotide-binding protein. This is Nucleotide-binding protein LBJ_2391 from Leptospira borgpetersenii serovar Hardjo-bovis (strain JB197).